Reading from the N-terminus, the 229-residue chain is Ribonuclease HII (229 aa).

The RNase H type-2 domain occupies 34-223; it reads WPVAGADEAG…LRKVEDGPQM (190 aa). Residues Asp-40, Glu-41, and Asp-131 each coordinate a divalent metal cation.

Belongs to the RNase HII family. It depends on Mn(2+) as a cofactor. Requires Mg(2+) as cofactor.

The protein resides in the cytoplasm. It carries out the reaction Endonucleolytic cleavage to 5'-phosphomonoester.. Its function is as follows. Endonuclease that specifically degrades the RNA of RNA-DNA hybrids. This chain is Ribonuclease HII, found in Rhizobium leguminosarum bv. trifolii (strain WSM2304).